The following is a 341-amino-acid chain: Ketol-acid reductoisomerase (NADP(+)) (341 aa).

A KARI N-terminal Rossmann domain is found at 2–181 (AKVYYNGDAN…GAARAGVLET (180 aa)). NADP(+)-binding positions include 25-28 (YGSQ), R48, S52, and 82-85 (DEKQ). The active site involves H107. G133 is a binding site for NADP(+). In terms of domain architecture, KARI C-terminal knotted spans 182–327 (TFKEETETDL…RELRSMMPFV (146 aa)). Mg(2+) contacts are provided by D190, E194, E226, and E230. S251 contributes to the substrate binding site.

Belongs to the ketol-acid reductoisomerase family. Requires Mg(2+) as cofactor.

It catalyses the reaction (2R)-2,3-dihydroxy-3-methylbutanoate + NADP(+) = (2S)-2-acetolactate + NADPH + H(+). It carries out the reaction (2R,3R)-2,3-dihydroxy-3-methylpentanoate + NADP(+) = (S)-2-ethyl-2-hydroxy-3-oxobutanoate + NADPH + H(+). Its pathway is amino-acid biosynthesis; L-isoleucine biosynthesis; L-isoleucine from 2-oxobutanoate: step 2/4. It functions in the pathway amino-acid biosynthesis; L-valine biosynthesis; L-valine from pyruvate: step 2/4. Functionally, involved in the biosynthesis of branched-chain amino acids (BCAA). Catalyzes an alkyl-migration followed by a ketol-acid reduction of (S)-2-acetolactate (S2AL) to yield (R)-2,3-dihydroxy-isovalerate. In the isomerase reaction, S2AL is rearranged via a Mg-dependent methyl migration to produce 3-hydroxy-3-methyl-2-ketobutyrate (HMKB). In the reductase reaction, this 2-ketoacid undergoes a metal-dependent reduction by NADPH to yield (R)-2,3-dihydroxy-isovalerate. The polypeptide is Ketol-acid reductoisomerase (NADP(+)) (Geobacillus kaustophilus (strain HTA426)).